Consider the following 834-residue polypeptide: Unextended protein (834 aa).

Residues 1–20 form the signal peptide; the sequence is MNTYFISFITIIIFANGING. At 21-182 the chain is on the extracellular side; that stretch reads TSVDTSNKLL…DFLKIKTFEP (162 aa). N-linked (GlcNAc...) asparagine glycosylation is found at asparagine 38, asparagine 42, and asparagine 156. The region spanning 182–361 is the CNNM transmembrane domain; that stretch reads PLIPVWLAII…NDVNDLDKNE (180 aa). A helical membrane pass occupies residues 183–203; the sequence is LIPVWLAIIIIVTCLGFSALF. The Cytoplasmic segment spans residues 204 to 244; the sequence is SGLNLGLMSMDRTELKILRNTGTEKEKKYASKIAPVRDQGN. Residues 245-265 traverse the membrane as a helical segment; sequence YLLCSILLGNVLVNSTFTILL. Topologically, residues 266–267 are extracellular; sequence DG. Residues 268–288 traverse the membrane as a helical segment; the sequence is LTSGLFAVIFSTLAIVLFGEI. The Cytoplasmic segment spans residues 289–298; sequence TPQAVCSRHG. The chain crosses the membrane as a helical span at residues 299–319; sequence LAIGAKTILVTKTVMAITAPL. Over 320–834 the chain is Extracellular; that stretch reads SYPVSRILDK…DKFESKQSKP (515 aa). CBS domains follow at residues 380–441 and 448–515; these read MTHI…NTPL and YQNP…IVDE. The N-linked (GlcNAc...) asparagine glycan is linked to asparagine 522. 604 to 656 contacts a nucleoside 3',5'-cyclic phosphate; that stretch reads YIFTQGKAVDFFVLILEGRVEVTIGKEALMFESGPFTYFGTQALVPNVVIDSP. The segment at 739-765 is disordered; it reads CFAQNQSTRRLSNRSINSSPTNMNRSP. The segment covering 740 to 763 has biased composition (polar residues); it reads FAQNQSTRRLSNRSINSSPTNMNR. Residues asparagine 743, asparagine 751, and asparagine 790 are each glycosylated (N-linked (GlcNAc...) asparagine). Residues 807–834 are disordered; the sequence is SGEQDTTAASMPLLPKLDDKFESKQSKP. Positions 822-834 are enriched in basic and acidic residues; it reads KLDDKFESKQSKP.

Belongs to the ACDP family. As to quaternary structure, interacts with PRL-1, possibly at the plasma membrane.

Its subcellular location is the cell membrane. In terms of biological role, probable metal transporter. Acts downstream of PRL-1 and protects the nervous system against olfactory carbon dioxide stimulation. The polypeptide is Unextended protein (Drosophila melanogaster (Fruit fly)).